The chain runs to 141 residues: Hemoglobin subunit alpha-1/2 (141 aa).

The Globin domain maps to 1 to 141; that stretch reads VLSPADKTNV…VSTVLTSKYR (141 aa). A Phosphoserine modification is found at S3. K7 is modified (N6-succinyllysine). Position 8 is a phosphothreonine (T8). N6-succinyllysine is present on K11. K16 carries the N6-acetyllysine; alternate modification. At K16 the chain carries N6-succinyllysine; alternate. Y24 carries the post-translational modification Phosphotyrosine. S35 is subject to Phosphoserine. K40 carries the N6-succinyllysine modification. Residue S49 is modified to Phosphoserine. H58 contacts O2. H87 provides a ligand contact to heme b. S102 bears the Phosphoserine mark. At T108 the chain carries Phosphothreonine. S124 and S131 each carry phosphoserine. T134 and T137 each carry phosphothreonine. S138 is subject to Phosphoserine.

The protein belongs to the globin family. Heterotetramer of two alpha chains and two beta chains. As to expression, red blood cells.

In terms of biological role, involved in oxygen transport from the lung to the various peripheral tissues. This is Hemoglobin subunit alpha-1/2 from Macaca speciosa (Stump-tail macaque).